The sequence spans 207 residues: ATP synthase subunit b 2 (207 aa).

The chain crosses the membrane as a helical span at residues 53-72 (TYASQLLWLVITFGVFYLLM).

It belongs to the ATPase B chain family. F-type ATPases have 2 components, F(1) - the catalytic core - and F(0) - the membrane proton channel. F(1) has five subunits: alpha(3), beta(3), gamma(1), delta(1), epsilon(1). F(0) has three main subunits: a(1), b(2) and c(10-14). The alpha and beta chains form an alternating ring which encloses part of the gamma chain. F(1) is attached to F(0) by a central stalk formed by the gamma and epsilon chains, while a peripheral stalk is formed by the delta and b chains.

The protein localises to the cell inner membrane. Functionally, f(1)F(0) ATP synthase produces ATP from ADP in the presence of a proton or sodium gradient. F-type ATPases consist of two structural domains, F(1) containing the extramembraneous catalytic core and F(0) containing the membrane proton channel, linked together by a central stalk and a peripheral stalk. During catalysis, ATP synthesis in the catalytic domain of F(1) is coupled via a rotary mechanism of the central stalk subunits to proton translocation. Component of the F(0) channel, it forms part of the peripheral stalk, linking F(1) to F(0). The b'-subunit is a diverged and duplicated form of b found in plants and photosynthetic bacteria. This chain is ATP synthase subunit b 2 (atpF2), found in Rhizobium etli (strain ATCC 51251 / DSM 11541 / JCM 21823 / NBRC 15573 / CFN 42).